A 1308-amino-acid chain; its full sequence is Cadherin-related family member 2 (1308 aa).

Residues 1-20 form the signal peptide; that stretch reads MAWLWLLCALLPAFMVSVTA. The Extracellular portion of the chain corresponds to 21–1152; it reads NSPPSFGVNM…EPDQQKLLTS (1132 aa). Cadherin domains lie at 33–124, 125–241, 242–353, 368–480, 481–586, 586–695, 695–807, 809–927, and 929–1051; these read VTLP…IPVF, LNTE…DPRF, IREF…KPEF, AQVN…RPVF, SQSL…PPVV, VRGS…LPVF, FNQS…PPTL, AASL…APYF, and PNNQ…RLQF. A helical transmembrane segment spans residues 1153–1173; that stretch reads VIIGLVVSLVLVLVILITALV. Over 1174–1308 the chain is Cytoplasmic; that stretch reads CLRKSYHRKL…TNPGLDTTDL (135 aa). The interval 1178-1308 is mediates interaction with USH1C and MYO7B and is required for proper localization to microvilli tips and function in microvilli organization; it reads SYHRKLRAMK…TNPGLDTTDL (131 aa). A Phosphoserine modification is found at Ser-1245. The segment at 1251-1308 is disordered; sequence VDLDMDSKEFKRKDLPGDPPEPDPEPLTAVLSGRSAGASEQQKKNLSFTNPGLDTTDL. Over residues 1255 to 1266 the composition is skewed to basic and acidic residues; the sequence is MDSKEFKRKDLP. Positions 1288 to 1308 are enriched in polar residues; sequence ASEQQKKNLSFTNPGLDTTDL. The residue at position 1297 (Ser-1297) is a Phosphoserine.

As to quaternary structure, part of the IMAC/intermicrovillar adhesion complex/intermicrovillar tip-link complex composed of ANKS4B, MYO7B, USH1C, CDHR2 and CDHR5. Interacts with MAST2. Interacts (via cytoplasmic domain) with USH1C and MYO7B; required for proper localization of CDHR2 to microvilli tips and its function in brush border differentiation.

It is found in the apical cell membrane. The protein resides in the cell projection. Its subcellular location is the microvillus membrane. The protein localises to the cell junction. Intermicrovillar adhesion molecule that forms, via its extracellular domain, calcium-dependent heterophilic complexes with CDHR5 on adjacent microvilli. Thereby, controls the packing of microvilli at the apical membrane of epithelial cells. Through its cytoplasmic domain, interacts with microvillus cytoplasmic proteins to form the intermicrovillar adhesion complex/IMAC. This complex plays a central role in microvilli and epithelial brush border differentiation. May also play a role in cell-cell adhesion and contact inhibition in epithelial cells. This is Cadherin-related family member 2 from Mus musculus (Mouse).